The sequence spans 407 residues: Putative cell wall shaping protein YabE (407 aa).

Positions Met-1–Ala-31 are cleaved as a signal peptide. One can recognise a G5 domain in the interval Ile-206–Gln-286.

In terms of biological role, suggested to be involved in cell wall modification. This is Putative cell wall shaping protein YabE (yabE) from Bacillus subtilis (strain 168).